Consider the following 1021-residue polypeptide: Receptor-like protein EIX2 (1021 aa).

The first 24 residues, 1–24 (MGKRTNPRHFLVTWSLLLLETAFG), serve as a signal peptide directing secretion. Residues 25 to 109 (LTSREVNKTL…PILTGKVSPS (85 aa)) form an N-cap region. The Extracellular segment spans residues 25 to 963 (LTSREVNKTL…DDDDEFSSLE (939 aa)). Asn-31 is a glycosylation site (N-linked (GlcNAc...) asparagine). 6 LRR repeats span residues 113 to 136 (LEYL…RFIG), 138 to 161 (LKRL…QFQN), 162 to 184 (LTSL…VWLS), 186 to 211 (LSSL…ITKV), 214 to 237 (LKEL…VANS), and 239 to 262 (LISL…SWLF). 2 N-linked (GlcNAc...) asparagine glycosylation sites follow: Asn-145 and Asn-161. N-linked (GlcNAc...) asparagine glycosylation is present at Asn-236. An N-linked (GlcNAc...) asparagine glycan is attached at Asn-263. 14 LRR repeats span residues 265–288 (STSL…RFGS), 290–313 (MYLE…SFGN), 314–337 (LTRL…LFLR), 342–365 (RKSL…VTRF), 366–388 (SSLK…RVGQ), 389–412 (VSSL…LALF), 413–436 (PSLR…IGKL), 437–459 (SQLR…MGQL), 461–483 (NLER…HFSN), 484–507 (LSSL…DWVP), 509–532 (FQLQ…LQTQ), 533–555 (NNYT…WFSN), 557–581 (PPEL…IVSK), and 583–607 (DYMI…NIQI). Asn-313 carries an N-linked (GlcNAc...) asparagine glycan. A glycan (N-linked (GlcNAc...) asparagine) is linked at Asn-483. 4 N-linked (GlcNAc...) asparagine glycosylation sites follow: Asn-534, Asn-544, Asn-564, and Asn-593. The LRR 21; degenerate repeat unit spans residues 608 to 626 (FYLHKNHFSGSISSICRNT). LRR repeat units lie at residues 627–651 (IGAA…WMNM), 652–675 (SNLA…LGSL), 677–698 (NLEA…FSQC), 699–722 (QLLQ…IGTD), 723–747 (LLQL…ICQL), and 749–773 (FLQI…NFTI). N-linked (GlcNAc...) asparagine glycosylation is found at Asn-650 and Asn-663. 2 N-linked (GlcNAc...) asparagine glycosylation sites follow: Asn-770 and Asn-778. LRR repeat units follow at residues 818–842 (LLYL…IAEM), 843–866 (RGLR…IGQM), 867–890 (KLLE…LSNL), and 892–913 (FLSV…STQL). Residues Asn-849, Asn-856, and Asn-889 are each glycosylated (N-linked (GlcNAc...) asparagine). Positions 914 to 963 (QSFDRSSYSGNAQLCGPPLEECPGYAPPIDRGSNTNPQEHDDDDEFSSLE) are C-cap/acidic domain. A helical transmembrane segment spans residues 964–984 (FYVSMVLGFFVTFWGILGCLI). Topologically, residues 985 to 1021 (VNRSWRNAYFTFLTDMKSWLHMTSRVCFARLKGKLRN) are cytoplasmic.

It belongs to the RLP family. In terms of assembly, interacts with EIX elicitor protein.

The protein resides in the cell membrane. Functionally, involved in plant defense. Confers resistance to the fungal pathogen T.viride through recognition of the EIX elicitor protein. The polypeptide is Receptor-like protein EIX2 (Solanum lycopersicum (Tomato)).